Here is a 201-residue protein sequence, read N- to C-terminus: Probable nicotinate-nucleotide adenylyltransferase (201 aa).

Belongs to the NadD family.

It catalyses the reaction nicotinate beta-D-ribonucleotide + ATP + H(+) = deamido-NAD(+) + diphosphate. It functions in the pathway cofactor biosynthesis; NAD(+) biosynthesis; deamido-NAD(+) from nicotinate D-ribonucleotide: step 1/1. Functionally, catalyzes the reversible adenylation of nicotinate mononucleotide (NaMN) to nicotinic acid adenine dinucleotide (NaAD). This chain is Probable nicotinate-nucleotide adenylyltransferase, found in Clostridium botulinum (strain Kyoto / Type A2).